Consider the following 87-residue polypeptide: Cell division topological specificity factor (87 aa).

It belongs to the MinE family.

In terms of biological role, prevents the cell division inhibition by proteins MinC and MinD at internal division sites while permitting inhibition at polar sites. This ensures cell division at the proper site by restricting the formation of a division septum at the midpoint of the long axis of the cell. The chain is Cell division topological specificity factor from Chelativorans sp. (strain BNC1).